We begin with the raw amino-acid sequence, 471 residues long: MGRTLAEKVWDEHVVRSTPGEPDLLYIDLHLIHEVTSPQAFDGLRLAGRTVRRPDLTLATEDHNVPTLDWDKPIADPVSKTQVDTLRRNAAEFGVRLHPLGDVEQGIVHVVGPQLGLTQPGMTIVCGDSHTSTHGAFGAIAFGIGTSEVEHVLATQTLPQAKPKTMAVTVEGSLPDGVTAKDLVLTLIAHTGTGGGQGYIVEYRGPAIEELSMEGRMTVCNMSIEWGAKAGLIAPDQTTFDYIEGRPEAPKGADWDAAVAHWKTLVTDADATFDKEIVLDASTMTPFVTWGTNPGQGVPLGGSVPDPAQYDDPSDRIAAEKACEYMGLEAGTPMRDIKVDTVFIGSCTNGRIEDLRAAAEIIKGRQVDKSTRLLVVPGSVRVRLQAQDEGLDVIFKEAGGEWRGAGCSMCLGMNPDTLQPGERSASTSNRNFEGRQGKGGRTHLVSVPVAAATAIRGTLSSPADLEPVGSN.

Cys-347, Cys-407, and Cys-410 together coordinate [4Fe-4S] cluster. Residues 417-443 (TLQPGERSASTSNRNFEGRQGKGGRTH) are disordered.

Belongs to the aconitase/IPM isomerase family. LeuC type 1 subfamily. In terms of assembly, heterodimer of LeuC and LeuD. It depends on [4Fe-4S] cluster as a cofactor.

It carries out the reaction (2R,3S)-3-isopropylmalate = (2S)-2-isopropylmalate. The protein operates within amino-acid biosynthesis; L-leucine biosynthesis; L-leucine from 3-methyl-2-oxobutanoate: step 2/4. Its function is as follows. Catalyzes the isomerization between 2-isopropylmalate and 3-isopropylmalate, via the formation of 2-isopropylmaleate. In Nocardioides sp. (strain ATCC BAA-499 / JS614), this protein is 3-isopropylmalate dehydratase large subunit.